The primary structure comprises 357 residues: Eugenol O-methyltransferase (357 aa).

Residues Gly-203, Asp-226, Asp-246, Met-247, and Lys-260 each coordinate S-adenosyl-L-methionine. Catalysis depends on His-264, which acts as the Proton acceptor.

Belongs to the class I-like SAM-binding methyltransferase superfamily. Cation-independent O-methyltransferase family. COMT subfamily. In terms of tissue distribution, specifically expressed in the peltate glandular trichomes on the surface of the young basil leaves.

The enzyme catalyses (E)-isoeugenol + S-adenosyl-L-methionine = (E)-isomethyleugenol + S-adenosyl-L-homocysteine + H(+). It functions in the pathway aromatic compound metabolism; phenylpropanoid biosynthesis. Phenylpropene O-methyltransferase that catalyzes the methylation of the para-4-hydroxyl of eugenol to methyleugenol. Can also convert chavicol to methylchavicol but with less affinity. In Ocimum basilicum (Sweet basil), this protein is Eugenol O-methyltransferase (EOMT1).